Here is a 105-residue protein sequence, read N- to C-terminus: Serine protease inhibitor Kazal-type 6 (105 aa).

Residues 1–23 (MKVAGVFLLLSLALLCFFSGEFS) form the signal peptide. Gln24 carries the post-translational modification Pyrrolidone carboxylic acid. A Kazal-like domain is found at 49 to 105 (RLFQINCGEFRDPKVFCTRESDPLCGSDGQTYGNKCAFCKALEKSSGKINLKHRGKC). 3 disulfides stabilise this stretch: Cys55-Cys87, Cys65-Cys84, and Cys73-Cys105.

The protein resides in the secreted. Serine protease inhibitor selective for kallikreins. Efficiently inhibits KLK4, KLK5, KLK6, KLK7, KLK12, KLK13 and KLK14. Doesn't inhibit KLK8. This Rattus norvegicus (Rat) protein is Serine protease inhibitor Kazal-type 6 (Spink6).